The primary structure comprises 69 residues: Disintegrin VLO5B (69 aa).

Residues 1–66 (MNSANPCCDP…DCPRNPWKSE (66 aa)) form the Disintegrin domain. Intrachain disulfides connect Cys7–Cys30, Cys21–Cys27, Cys26–Cys51, and Cys39–Cys58. Positions 43–45 (MLD) match the Cell attachment site; atypical (MLD) motif.

It belongs to the disintegrin family. Dimeric disintegrin subfamily. In terms of assembly, heterodimer with VLO5A; disulfide-linked. As to expression, expressed by the venom gland.

It localises to the secreted. Functionally, poor inhibitor of platelet aggregation. The disintegrin inhibits the adhesion of the alpha-4/beta-1 (ITGA4/ITGB1) integrin to VCAM-1. Inhibition on alpha-2b/beta-3 (ITGA2B/ITGB3) is low. The chain is Disintegrin VLO5B from Macrovipera lebetina obtusa (Levant blunt-nosed viper).